Here is a 635-residue protein sequence, read N- to C-terminus: Bifunctional lysine-specific demethylase and histidyl-hydroxylase NO66 (635 aa).

Disordered regions lie at residues 1–115 (MSAV…LQNS) and 141–190 (FNGE…KANG). A compositionally biased stretch (low complexity) spans 84-99 (ASASDINTSASKNVNA). A compositionally biased stretch (polar residues) spans 141-156 (FNGESLKNNSNHSTPV). Residues 295–440 (CSIRMLNPQT…DLLELFFPHA (146 aa)) form the JmjC domain. The Fe cation site is built by His-341, Asp-343, and His-406.

It belongs to the ROX family. NO66 subfamily. It depends on Fe(2+) as a cofactor.

The protein resides in the nucleus. The catalysed reaction is N(6),N(6)-dimethyl-L-lysyl(36)-[histone H3] + 2 2-oxoglutarate + 2 O2 = L-lysyl(36)-[histone H3] + 2 formaldehyde + 2 succinate + 2 CO2. Oxygenase that can act as both a histone lysine demethylase and a ribosomal histidine hydroxylase. Specifically demethylates 'Lys-4' (H3K4me) and 'Lys-36' (H3K36me) of histone H3, thereby playing a central role in histone code. This is Bifunctional lysine-specific demethylase and histidyl-hydroxylase NO66 from Aedes aegypti (Yellowfever mosquito).